Consider the following 69-residue polypeptide: MFTMKKSLLLLFFLGTINLSLCEQERNAEEERRDDDEMDVEVEKRFLSTALKVAANVVPTLFCKITKKC.

Residues M1 to C22 form the signal peptide. Residues E23–E43 constitute a propeptide, removed in mature form. A disulfide bond links C63 and C69.

Expressed by the skin glands.

It is found in the secreted. Functionally, antimicrobial peptide. Active against Gram-positive bacteria R.rhodochrous X15 and B.licheniformis X39 and against Gram-negative bacterium E.coli ATCC 25922. Has antifungal activity against a slime mold isolate. Has weak hemolytic activity against human erythrocytes. This Amolops chunganensis (Chungan torrent frog) protein is Brevinin-1CG1.